Here is a 270-residue protein sequence, read N- to C-terminus: Phosphatidylglycerol--prolipoprotein diacylglyceryl transferase (270 aa).

The next 7 helical transmembrane spans lie at 10 to 30 (VALAIGPLKIHWYGLMYLIGI), 56 to 76 (LIFWLSMGVIVGGRLGYVLFY), 92 to 112 (WKGGMAFHGGFIGVMIAAWWF), 120 to 140 (FFQLMDFVAPMVPIGLGAGRI), 174 to 194 (PSQLYQFALEGVALFLILYIF), 202 to 222 (MAVSGMFALFYGIFRFVVEFV), and 236 to 256 (WVTMGQILSLPMILGGLGLLW). Arginine 139 lines the a 1,2-diacyl-sn-glycero-3-phospho-(1'-sn-glycerol) pocket.

Belongs to the Lgt family.

The protein localises to the cell inner membrane. The catalysed reaction is L-cysteinyl-[prolipoprotein] + a 1,2-diacyl-sn-glycero-3-phospho-(1'-sn-glycerol) = an S-1,2-diacyl-sn-glyceryl-L-cysteinyl-[prolipoprotein] + sn-glycerol 1-phosphate + H(+). It participates in protein modification; lipoprotein biosynthesis (diacylglyceryl transfer). Functionally, catalyzes the transfer of the diacylglyceryl group from phosphatidylglycerol to the sulfhydryl group of the N-terminal cysteine of a prolipoprotein, the first step in the formation of mature lipoproteins. The chain is Phosphatidylglycerol--prolipoprotein diacylglyceryl transferase from Pseudomonas fluorescens (strain SBW25).